Consider the following 341-residue polypeptide: Anthranilate phosphoribosyltransferase (341 aa).

5-phospho-alpha-D-ribose 1-diphosphate is bound by residues Gly-79, 82–83 (GD), Thr-87, 89–92 (NIST), 107–115 (KHGNRAASS), and Ala-119. Gly-79 is a binding site for anthranilate. Ser-91 contacts Mg(2+). Asn-110 contacts anthranilate. Arg-165 is a binding site for anthranilate. The Mg(2+) site is built by Asp-224 and Glu-225.

It belongs to the anthranilate phosphoribosyltransferase family. As to quaternary structure, homodimer. Mg(2+) is required as a cofactor.

The catalysed reaction is N-(5-phospho-beta-D-ribosyl)anthranilate + diphosphate = 5-phospho-alpha-D-ribose 1-diphosphate + anthranilate. Its pathway is amino-acid biosynthesis; L-tryptophan biosynthesis; L-tryptophan from chorismate: step 2/5. Its function is as follows. Catalyzes the transfer of the phosphoribosyl group of 5-phosphorylribose-1-pyrophosphate (PRPP) to anthranilate to yield N-(5'-phosphoribosyl)-anthranilate (PRA). This chain is Anthranilate phosphoribosyltransferase, found in Lacticaseibacillus paracasei (strain ATCC 334 / BCRC 17002 / CCUG 31169 / CIP 107868 / KCTC 3260 / NRRL B-441) (Lactobacillus paracasei).